A 78-amino-acid chain; its full sequence is UPF0270 protein IL0325 (78 aa).

It belongs to the UPF0270 family.

This Idiomarina loihiensis (strain ATCC BAA-735 / DSM 15497 / L2-TR) protein is UPF0270 protein IL0325.